The following is a 371-amino-acid chain: Cytochrome b (371 aa).

4 helical membrane passes run 25 to 45 (FGSM…FLAV), 69 to 90 (WLMQ…YIHI), 105 to 125 (WMSG…GYVL), and 170 to 190 (FFAL…LHII). Residues H75 and H89 each coordinate heme b. 2 residues coordinate heme b: H174 and H188. H193 serves as a coordination point for a ubiquinone. A run of 4 helical transmembrane segments spans residues 218-238 (YKDL…VSFF), 280-300 (LGGA…PLTH), 312-332 (LSQL…WAAT), and 339-358 (YIII…ISTP).

This sequence belongs to the cytochrome b family. As to quaternary structure, the cytochrome bc1 complex contains 3 respiratory subunits (MT-CYB, CYC1 and UQCRFS1), 2 core proteins (UQCRC1 and UQCRC2) and probably 6 low-molecular weight proteins. It depends on heme b as a cofactor.

The protein resides in the mitochondrion inner membrane. Its function is as follows. Component of the ubiquinol-cytochrome c reductase complex (complex III or cytochrome b-c1 complex) that is part of the mitochondrial respiratory chain. The b-c1 complex mediates electron transfer from ubiquinol to cytochrome c. Contributes to the generation of a proton gradient across the mitochondrial membrane that is then used for ATP synthesis. This is Cytochrome b (MT-CYB) from Python regius (Ball python).